The primary structure comprises 1022 residues: Integrator complex subunit 4 (1022 aa).

Residues Thr-148 and Lys-184 each contribute to the 1D-myo-inositol hexakisphosphate site. The disordered stretch occupies residues 818-840; the sequence is KDEEEKPPVVETDMPMKESVSRD.

It belongs to the Integrator subunit 4 family. In terms of assembly, belongs to the multiprotein complex Integrator, at least composed of IntS1, IntS2, IntS3, IntS4, omd/IntS5, IntS6, defl/IntS7, IntS8, IntS9, IntS10, IntS11, IntS12, asun/IntS13, IntS14 and IntS15. The core complex associates with protein phosphatase 2A subunits mts/PP2A and Pp2A-29B, to form the Integrator-PP2A (INTAC) complex. IntS4 is part of the RNA endonuclease subcomplex, composed of IntS4, IntS9, IntS11 and inositol hexakisphosphate (InsP6).

It localises to the nucleus. In terms of biological role, component of the integrator complex, a multiprotein complex that terminates RNA polymerase II (Pol II) transcription in the promoter-proximal region of genes. The integrator complex provides a quality checkpoint during transcription elongation by driving premature transcription termination of transcripts that are unfavorably configured for transcriptional elongation: the complex terminates transcription by (1) catalyzing dephosphorylation of the C-terminal domain (CTD) of Pol II subunit Polr2A/Rbp1 and Spt5, and (2) degrading the exiting nascent RNA transcript via endonuclease activity. The integrator complex is also involved in the 3'-end processing of the U7 snRNA, and also the spliceosomal snRNAs U1, U2, U4 and U5. In Drosophila melanogaster (Fruit fly), this protein is Integrator complex subunit 4.